The following is a 344-amino-acid chain: Probable dual-specificity RNA methyltransferase RlmN (344 aa).

The active-site Proton acceptor is glutamate 90. The 231-residue stretch at 96 to 326 folds into the Radical SAM core domain; the sequence is YKYGNAICIS…VTIRRELGSS (231 aa). A disulfide bond links cysteine 103 and cysteine 331. 3 residues coordinate [4Fe-4S] cluster: cysteine 110, cysteine 114, and cysteine 117. S-adenosyl-L-methionine is bound by residues 157–158, serine 189, 212–214, and asparagine 288; these read GE and SLH. Catalysis depends on cysteine 331, which acts as the S-methylcysteine intermediate.

It belongs to the radical SAM superfamily. RlmN family. [4Fe-4S] cluster serves as cofactor.

The protein localises to the cytoplasm. It catalyses the reaction adenosine(2503) in 23S rRNA + 2 reduced [2Fe-2S]-[ferredoxin] + 2 S-adenosyl-L-methionine = 2-methyladenosine(2503) in 23S rRNA + 5'-deoxyadenosine + L-methionine + 2 oxidized [2Fe-2S]-[ferredoxin] + S-adenosyl-L-homocysteine. The catalysed reaction is adenosine(37) in tRNA + 2 reduced [2Fe-2S]-[ferredoxin] + 2 S-adenosyl-L-methionine = 2-methyladenosine(37) in tRNA + 5'-deoxyadenosine + L-methionine + 2 oxidized [2Fe-2S]-[ferredoxin] + S-adenosyl-L-homocysteine. Functionally, specifically methylates position 2 of adenine 2503 in 23S rRNA and position 2 of adenine 37 in tRNAs. This chain is Probable dual-specificity RNA methyltransferase RlmN, found in Caldicellulosiruptor saccharolyticus (strain ATCC 43494 / DSM 8903 / Tp8T 6331).